The following is a 78-amino-acid chain: Large ribosomal subunit protein bL28 (78 aa).

The protein belongs to the bacterial ribosomal protein bL28 family.

The sequence is that of Large ribosomal subunit protein bL28 from Prochlorococcus marinus (strain SARG / CCMP1375 / SS120).